Reading from the N-terminus, the 396-residue chain is Probable intron-encoded endonuclease aI3 (396 aa).

A disordered region spans residues 51 to 90 (TNNTNNNNPADSSSYESRMRAAGNSNSNSNSNSDSNINNT). The segment covering 74 to 90 (NSNSNSNSNSDSNINNT) has biased composition (low complexity).

The protein belongs to the LAGLIDADG endonuclease family.

The protein localises to the mitochondrion. Mitochondrial DNA endonuclease involved in intron homing. The polypeptide is Probable intron-encoded endonuclease aI3 (aI3) (Kluyveromyces lactis (strain ATCC 8585 / CBS 2359 / DSM 70799 / NBRC 1267 / NRRL Y-1140 / WM37) (Yeast)).